A 779-amino-acid polypeptide reads, in one-letter code: DNA topoisomerase 1 (779 aa).

One can recognise a Toprim domain in the interval 1-111 (MKLVIVESPA…VESDDFFKRV (111 aa)). Glu7 and Asp80 together coordinate Mg(2+). Positions 132 to 568 (DTNLVNAQQA…FWSGFNNNIE (437 aa)) constitute a Topo IA-type catalytic domain. The interaction with DNA stretch occupies residues 166–171 (SAGRVQ). The active-site O-(5'-phospho-DNA)-tyrosine intermediate is Tyr304. The C4-type zinc-finger motif lies at 600–627 (CPSCKTGQLSLKLGKFGAFLACSNYPEC).

It belongs to the type IA topoisomerase family. Monomer. Mg(2+) serves as cofactor.

The enzyme catalyses ATP-independent breakage of single-stranded DNA, followed by passage and rejoining.. Functionally, releases the supercoiling and torsional tension of DNA, which is introduced during the DNA replication and transcription, by transiently cleaving and rejoining one strand of the DNA duplex. Introduces a single-strand break via transesterification at a target site in duplex DNA. The scissile phosphodiester is attacked by the catalytic tyrosine of the enzyme, resulting in the formation of a DNA-(5'-phosphotyrosyl)-enzyme intermediate and the expulsion of a 3'-OH DNA strand. The free DNA strand then undergoes passage around the unbroken strand, thus removing DNA supercoils. Finally, in the religation step, the DNA 3'-OH attacks the covalent intermediate to expel the active-site tyrosine and restore the DNA phosphodiester backbone. This Rickettsia typhi (strain ATCC VR-144 / Wilmington) protein is DNA topoisomerase 1.